A 750-amino-acid chain; its full sequence is 5-methyltetrahydropteroyltriglutamate--homocysteine methyltransferase (750 aa).

5-methyltetrahydropteroyltri-L-glutamate is bound by residues Arg-15–Lys-18 and Lys-114. Residues Ile-425 to Ser-427 and Glu-478 each bind L-homocysteine. L-methionine contacts are provided by residues Ile-425–Ser-427 and Glu-478. Residue Trp-555 participates in 5-methyltetrahydropteroyltri-L-glutamate binding. Residue Asp-593 participates in L-homocysteine binding. Asp-593 is a binding site for L-methionine. Residue Glu-599 participates in 5-methyltetrahydropteroyltri-L-glutamate binding. His-636, Cys-638, and Glu-660 together coordinate Zn(2+). Residue His-689 is the Proton donor of the active site. Cys-721 is a Zn(2+) binding site.

It belongs to the vitamin-B12 independent methionine synthase family. The cofactor is Zn(2+).

It carries out the reaction 5-methyltetrahydropteroyltri-L-glutamate + L-homocysteine = tetrahydropteroyltri-L-glutamate + L-methionine. It participates in amino-acid biosynthesis; L-methionine biosynthesis via de novo pathway; L-methionine from L-homocysteine (MetE route): step 1/1. Its function is as follows. Catalyzes the transfer of a methyl group from 5-methyltetrahydrofolate to homocysteine resulting in methionine formation. This chain is 5-methyltetrahydropteroyltriglutamate--homocysteine methyltransferase, found in Streptococcus sanguinis (strain SK36).